The chain runs to 402 residues: MLQVILNIRLDHKTSDVKTMESSHERMEAIVAELESSGTVMEKVPIRTCNRIEYYLSVQEIPPGFEFDGFTVEGDEDALRHILRLASGLESMIIGEDQILGQIKAARVQALREGTCGPVLDMVFTKAVHVGQTVRRKTQINRGSVSIGSAAVDLAESIHGDLKCRKVLAIGAGKMGTLVARALAEKHLSAIMVANRTYERAYQLACELGGDAIHFDRLNRALRDADVVISATGSPHYILTRERVRDAIPPERRSAVVMVDIANPRDIEESVRELGIRLFTIDDLRGVAEENRRRREAEAREAERIVEGELKLLLRSLKHMEVEPLLAEVRGNMESLRRREAERALNKIMNSSDPEGVIEALSRSIVDKIFHDIAISIRQAAERGDEEFLSMCAKLFNCKDLK.

Substrate-binding positions include 48-51, Ser-91, 96-98, and Gln-102; these read TCNR and EDQ. Residue Cys-49 is the Nucleophile of the active site. NADP(+) is bound at residue 171–176; the sequence is GAGKMG.

Belongs to the glutamyl-tRNA reductase family. Homodimer.

It carries out the reaction (S)-4-amino-5-oxopentanoate + tRNA(Glu) + NADP(+) = L-glutamyl-tRNA(Glu) + NADPH + H(+). It participates in porphyrin-containing compound metabolism; protoporphyrin-IX biosynthesis; 5-aminolevulinate from L-glutamyl-tRNA(Glu): step 1/2. Its function is as follows. Catalyzes the NADPH-dependent reduction of glutamyl-tRNA(Glu) to glutamate 1-semialdehyde (GSA). In Methanothermobacter thermautotrophicus (strain ATCC 29096 / DSM 1053 / JCM 10044 / NBRC 100330 / Delta H) (Methanobacterium thermoautotrophicum), this protein is Glutamyl-tRNA reductase.